Here is a 408-residue protein sequence, read N- to C-terminus: Arginine biosynthesis bifunctional protein ArgJ (408 aa).

Thr158, Lys184, Thr195, Glu281, Asn403, and Thr408 together coordinate substrate. The Nucleophile role is filled by Thr195.

It belongs to the ArgJ family. Heterotetramer of two alpha and two beta chains.

It localises to the cytoplasm. The enzyme catalyses N(2)-acetyl-L-ornithine + L-glutamate = N-acetyl-L-glutamate + L-ornithine. The catalysed reaction is L-glutamate + acetyl-CoA = N-acetyl-L-glutamate + CoA + H(+). Its pathway is amino-acid biosynthesis; L-arginine biosynthesis; L-ornithine and N-acetyl-L-glutamate from L-glutamate and N(2)-acetyl-L-ornithine (cyclic): step 1/1. The protein operates within amino-acid biosynthesis; L-arginine biosynthesis; N(2)-acetyl-L-ornithine from L-glutamate: step 1/4. In terms of biological role, catalyzes two activities which are involved in the cyclic version of arginine biosynthesis: the synthesis of N-acetylglutamate from glutamate and acetyl-CoA as the acetyl donor, and of ornithine by transacetylation between N(2)-acetylornithine and glutamate. In Bacillus cereus (strain ZK / E33L), this protein is Arginine biosynthesis bifunctional protein ArgJ.